The primary structure comprises 116 residues: NADH-ubiquinone oxidoreductase chain 3 (116 aa).

3 consecutive transmembrane segments (helical) span residues 10 to 30, 64 to 84, and 88 to 108; these read FLTLFVSILIFLITTLITFAA, FFLVAILFLLFDLEIALLFPL, and VFFHPIHTPLILTVGLIFEWV.

Belongs to the complex I subunit 3 family.

The protein resides in the mitochondrion membrane. It catalyses the reaction a ubiquinone + NADH + 5 H(+)(in) = a ubiquinol + NAD(+) + 4 H(+)(out). In terms of biological role, core subunit of the mitochondrial membrane respiratory chain NADH dehydrogenase (Complex I) that is believed to belong to the minimal assembly required for catalysis. Complex I functions in the transfer of electrons from NADH to the respiratory chain. The immediate electron acceptor for the enzyme is believed to be ubiquinone. The sequence is that of NADH-ubiquinone oxidoreductase chain 3 (ND3) from Patiria pectinifera (Starfish).